A 61-amino-acid chain; its full sequence is Large ribosomal subunit protein uL30 (61 aa).

This sequence belongs to the universal ribosomal protein uL30 family. Part of the 50S ribosomal subunit.

The polypeptide is Large ribosomal subunit protein uL30 (Clostridioides difficile (strain 630) (Peptoclostridium difficile)).